The following is a 371-amino-acid chain: Alanine dehydrogenase (371 aa).

Residues Arg-15 and Lys-74 each contribute to the substrate site. Residue His-95 is the Proton donor/acceptor of the active site. NAD(+) contacts are provided by residues Ser-133, 177 to 178, Asp-197, Ser-219, 238 to 239, 266 to 269, and 298 to 301; these read QA, VL, IAID, and VANM. The active-site Proton donor/acceptor is Asp-269.

The protein belongs to the AlaDH/PNT family. In terms of assembly, homohexamer. Trimer of dimer.

It carries out the reaction L-alanine + NAD(+) + H2O = pyruvate + NH4(+) + NADH + H(+). Its pathway is amino-acid degradation; L-alanine degradation via dehydrogenase pathway; NH(3) and pyruvate from L-alanine: step 1/1. Catalyzes the reversible reductive amination of pyruvate to L-alanine. May play a role in cell wall synthesis as L-alanine is an important constituent of the peptidoglycan layer. The polypeptide is Alanine dehydrogenase (ald) (Staphylococcus epidermidis (strain ATCC 35984 / DSM 28319 / BCRC 17069 / CCUG 31568 / BM 3577 / RP62A)).